Here is a 258-residue protein sequence, read N- to C-terminus: Imidazole glycerol phosphate synthase subunit HisF (258 aa).

Active-site residues include D12 and D131.

This sequence belongs to the HisA/HisF family. As to quaternary structure, heterodimer of HisH and HisF.

The protein localises to the cytoplasm. It carries out the reaction 5-[(5-phospho-1-deoxy-D-ribulos-1-ylimino)methylamino]-1-(5-phospho-beta-D-ribosyl)imidazole-4-carboxamide + L-glutamine = D-erythro-1-(imidazol-4-yl)glycerol 3-phosphate + 5-amino-1-(5-phospho-beta-D-ribosyl)imidazole-4-carboxamide + L-glutamate + H(+). It functions in the pathway amino-acid biosynthesis; L-histidine biosynthesis; L-histidine from 5-phospho-alpha-D-ribose 1-diphosphate: step 5/9. In terms of biological role, IGPS catalyzes the conversion of PRFAR and glutamine to IGP, AICAR and glutamate. The HisF subunit catalyzes the cyclization activity that produces IGP and AICAR from PRFAR using the ammonia provided by the HisH subunit. This Nocardioides sp. (strain ATCC BAA-499 / JS614) protein is Imidazole glycerol phosphate synthase subunit HisF.